Here is a 345-residue protein sequence, read N- to C-terminus: 4-hydroxy-2-oxovalerate aldolase 3 (345 aa).

The Pyruvate carboxyltransferase domain occupies 8–260 (ITVHDMTLRD…ETGVDVWKIQ (253 aa)). Residue 16–17 (RD) coordinates substrate. Residue aspartate 17 coordinates Mn(2+). The active-site Proton acceptor is histidine 20. Residues serine 170 and histidine 199 each contribute to the substrate site. Residues histidine 199 and histidine 201 each contribute to the Mn(2+) site. Position 290 (tyrosine 290) interacts with substrate.

The protein belongs to the 4-hydroxy-2-oxovalerate aldolase family.

The catalysed reaction is (S)-4-hydroxy-2-oxopentanoate = acetaldehyde + pyruvate. In Comamonas testosteroni (Pseudomonas testosteroni), this protein is 4-hydroxy-2-oxovalerate aldolase 3 (aphG).